The chain runs to 531 residues: SWI/SNF-related matrix-associated actin-dependent regulator of chromatin subfamily D member 2 (531 aa).

Residues Arg-81 and Arg-104 each carry the asymmetric dimethylarginine modification. Residue Ser-203 is modified to Phosphoserine. The interval 205–227 is disordered; sequence SKAEGDTAGTTGTPGGTPAGDKV. Thr-217 carries the post-translational modification Phosphothreonine. Residue Lys-226 forms a Glycyl lysine isopeptide (Lys-Gly) (interchain with G-Cter in SUMO2) linkage. Residues 306–383 form the SWIB/MDM2 domain; it reads HQPPQYKLDP…PMKLAGLLQH (78 aa).

It belongs to the SMARCD family. Component of the multiprotein chromatin-remodeling complexes SWI/SNF: SWI/SNF-A (BAF), SWI/SNF-B (PBAF) and related complexes. The canonical complex contains a catalytic subunit (either SMARCA4/BRG1/BAF190A or SMARCA2/BRM/BAF190B), and at least SMARCE1, ACTL6A/BAF53, SMARCC1/BAF155, SMARCC2/BAF170, and SMARCB1/SNF5/BAF47. Other subunits specific to each of the complexes may also be present permitting several possible combinations developmentally and tissue specific. Component of the BAF complex, which includes at least actin (ACTB), ARID1A/BAF250A, ARID1B/BAF250B, SMARCA2/BRM, SMARCA4/BRG1, ACTL6A/BAF53, ACTL6B/BAF53B, SMARCE1/BAF57, SMARCC1/BAF155, SMARCC2/BAF170, SMARCB1/SNF5/INI1, and one or more SMARCD1/BAF60A, SMARCD2/BAF60B, or SMARCD3/BAF60C. In muscle cells, the BAF complex also contains DPF3. Component of the SWI/SNF-B (PBAF) chromatin remodeling complex, at least composed of SMARCA4/BRG1, SMARCB1/BAF47/SNF5, ACTL6A/BAF53A or ACTL6B/BAF53B, SMARCE1/BAF57, SMARCD1/BAF60A, SMARCD2/BAF60B, perhaps SMARCD3/BAF60C, SMARCC1/BAF155, SMARCC2/BAF170, PBRM1/BAF180, ARID2/BAF200 and actin (ACTB). Interacts with UNKL. Interacts with CEBPE. Ubiquitinated through a signaling process involving RAC1 and the RING finger protein UNKL.

It localises to the nucleus. Involved in transcriptional activation and repression of select genes by chromatin remodeling (alteration of DNA-nucleosome topology). Component of SWI/SNF chromatin remodeling complexes that carry out key enzymatic activities, changing chromatin structure by altering DNA-histone contacts within a nucleosome in an ATP-dependent manner. Critical regulator of myeloid differentiation, controlling granulocytopoiesis and the expression of genes involved in neutrophil granule formation. The protein is SWI/SNF-related matrix-associated actin-dependent regulator of chromatin subfamily D member 2 (SMARCD2) of Bos taurus (Bovine).